The chain runs to 245 residues: MADS-box transcription factor 55 (245 aa).

One can recognise an MADS-box domain in the interval 1 to 61; the sequence is MARERREIRR…GKLSQFASSN (61 aa). Residues 109–199 form the K-box domain; the sequence is LQLEHSKCSS…RDQMPQVPTA (91 aa). Positions 197-245 are disordered; that stretch reads PTAGLAVPDTENVLTEDGQSSESVMTALNSGSSQDNDDGSDISLKLGLP. The span at 213–224 shows a compositional bias: polar residues; that stretch reads DGQSSESVMTAL.

As to expression, expressed in roots, shoots and developing panicles. Expressed in shoots.

The protein localises to the nucleus. In terms of biological role, transcription factor that acts as a negative regulator of brassinosteroid signaling. The polypeptide is MADS-box transcription factor 55 (MADS55) (Oryza sativa subsp. japonica (Rice)).